A 335-amino-acid chain; its full sequence is Methionine import ATP-binding protein MetN (335 aa).

Positions 2–241 (IQFQRLHKSY…PKHATTRRFV (240 aa)) constitute an ABC transporter domain. Residue 38-45 (GHSGAGKS) participates in ATP binding.

Belongs to the ABC transporter superfamily. Methionine importer (TC 3.A.1.24) family. As to quaternary structure, the complex is composed of two ATP-binding proteins (MetN), two transmembrane proteins (MetI) and a solute-binding protein (MetQ).

It localises to the cell inner membrane. It carries out the reaction L-methionine(out) + ATP + H2O = L-methionine(in) + ADP + phosphate + H(+). The catalysed reaction is D-methionine(out) + ATP + H2O = D-methionine(in) + ADP + phosphate + H(+). Functionally, part of the ABC transporter complex MetNIQ involved in methionine import. Responsible for energy coupling to the transport system. In Xanthomonas euvesicatoria pv. vesicatoria (strain 85-10) (Xanthomonas campestris pv. vesicatoria), this protein is Methionine import ATP-binding protein MetN.